Here is a 124-residue protein sequence, read N- to C-terminus: Darcynin homolog (124 aa).

Belongs to the darcynin family.

The sequence is that of Darcynin homolog from Granulibacter bethesdensis (strain ATCC BAA-1260 / CGDNIH1).